We begin with the raw amino-acid sequence, 225 residues long: MDTADPPLAVDIDGTLSRADRSIDGRVLDVLRGWDGPVVVATGKALPYAVALCQFAGIDERVIAENGGVAYVGDELLHFGDSRAVEQVAAAFEDAGHDIGWGDADLTNRWRETELAVSREQPLDVLSALAADHGLHVVDTGFAYHVKPESMSKGNALPAVAARLGVTAGDFVAVGDSANDVELFEAVGESYAVGNADDHAKGAAETVLSETHGDGFLAAVDRIRS.

Catalysis depends on Asp-11, which acts as the Nucleophile. Residues Asp-11 and Asp-13 each contribute to the Mg(2+) site. Lys-153 serves as a coordination point for substrate. Residues Asp-176 and Asp-180 each coordinate Mg(2+).

Belongs to the archaeal SPP-like hydrolase family. It depends on Mg(2+) as a cofactor.

It catalyses the reaction 2-phosphoglycolate + H2O = glycolate + phosphate. In terms of biological role, catalyzes the dephosphorylation of 2-phosphoglycolate. The chain is Phosphoglycolate phosphatase from Halobacterium salinarum (strain ATCC 29341 / DSM 671 / R1).